The chain runs to 927 residues: Transmembrane protein 132 homolog (927 aa).

Positions 1–18 (MLKKLWICISCIVTTALS) are cleaved as a signal peptide. The helical transmembrane segment at 749–769 (FHIFVLTIIGLIILFLFISFV) threads the bilayer. Positions 789-842 (LSSSSGSNSRQEETNEWVWLSQPQPPSSTISSGYSGNKSTAERQSSNGDDPSRT) are disordered. A compositionally biased stretch (polar residues) spans 817 to 842 (TISSGYSGNKSTAERQSSNGDDPSRT).

Belongs to the TMEM132 family. As to quaternary structure, interacts with gex-3. Specifically expressed in neurons.

It is found in the membrane. Functionally, regulates neuronal morphology via inhibition of the WAVE regulatory complex (WCR), a complex that controls F-actin cytoskeletal dynamics. The polypeptide is Transmembrane protein 132 homolog (Caenorhabditis elegans).